The primary structure comprises 292 residues: MSLFDWFADRRKEQSVVKVAQEPEEGDGLWSKCPECGQVVYRKDLLANASVCSNCGHHHRINSAERIALIADEGSFEAMDEALAPTDPLGFKDRRAYADRLRETQSGTGLRDGVITGMCRVDGIPMALAVMDFRFMGGSMGSVVGEKLTRLVEQATAKRLPLLIVCASGGARMQEGMLSLMQMAKISGALERHRQAGVLYMPLLTHPTTGGVTASFAMLGDLILAEPKALIGFAGRRVIEQTLREKLPDNFQTAEYLQDHGFVDTIVPRTQLKSTLANLMKLHGCLQGSAAV.

A CoA carboxyltransferase N-terminal domain is found at 29–292; sequence LWSKCPECGQ…HGCLQGSAAV (264 aa). The Zn(2+) site is built by cysteine 33, cysteine 36, cysteine 52, and cysteine 55. The segment at 33–55 adopts a C4-type zinc-finger fold; it reads CPECGQVVYRKDLLANASVCSNC.

It belongs to the AccD/PCCB family. Acetyl-CoA carboxylase is a heterohexamer composed of biotin carboxyl carrier protein (AccB), biotin carboxylase (AccC) and two subunits each of ACCase subunit alpha (AccA) and ACCase subunit beta (AccD). The cofactor is Zn(2+).

It localises to the cytoplasm. It carries out the reaction N(6)-carboxybiotinyl-L-lysyl-[protein] + acetyl-CoA = N(6)-biotinyl-L-lysyl-[protein] + malonyl-CoA. It participates in lipid metabolism; malonyl-CoA biosynthesis; malonyl-CoA from acetyl-CoA: step 1/1. Its function is as follows. Component of the acetyl coenzyme A carboxylase (ACC) complex. Biotin carboxylase (BC) catalyzes the carboxylation of biotin on its carrier protein (BCCP) and then the CO(2) group is transferred by the transcarboxylase to acetyl-CoA to form malonyl-CoA. This is Acetyl-coenzyme A carboxylase carboxyl transferase subunit beta from Synechococcus sp. (strain WH7803).